We begin with the raw amino-acid sequence, 85 residues long: Large ribosomal subunit protein bL27 (85 aa).

Belongs to the bacterial ribosomal protein bL27 family.

The chain is Large ribosomal subunit protein bL27 from Variovorax paradoxus (strain S110).